The following is a 122-amino-acid chain: Large ribosomal subunit protein uL18 (122 aa).

Belongs to the universal ribosomal protein uL18 family. As to quaternary structure, part of the 50S ribosomal subunit; part of the 5S rRNA/L5/L18/L25 subcomplex. Contacts the 5S and 23S rRNAs.

Functionally, this is one of the proteins that bind and probably mediate the attachment of the 5S RNA into the large ribosomal subunit, where it forms part of the central protuberance. The polypeptide is Large ribosomal subunit protein uL18 (Geobacter sp. (strain M21)).